Reading from the N-terminus, the 260-residue chain is Snake venom serine protease pallabin (260 aa).

Residues 1–18 (MVLIRVLANLLILQLSYA) form the signal peptide. A propeptide spanning residues 19 to 24 (QKSSKL) is cleaved from the precursor. Positions 25–251 (VIGGDECNIN…HLDWIENIIA (227 aa)) constitute a Peptidase S1 domain. Cystine bridges form between cysteine 31–cysteine 163, cysteine 50–cysteine 66, cysteine 98–cysteine 258, cysteine 142–cysteine 212, cysteine 174–cysteine 191, and cysteine 202–cysteine 227. The active-site Charge relay system is the histidine 65. N-linked (GlcNAc...) asparagine glycosylation occurs at asparagine 103. Aspartate 110 (charge relay system) is an active-site residue. Serine 206 (charge relay system) is an active-site residue.

It belongs to the peptidase S1 family. Snake venom subfamily. In terms of assembly, monomer. As to expression, expressed by the venom gland.

Its subcellular location is the secreted. Its function is as follows. Snake venom serine protease that may act in the hemostasis system of the prey. The polypeptide is Snake venom serine protease pallabin (JZTHR5) (Gloydius halys (Chinese water mocassin)).